An 838-amino-acid chain; its full sequence is Leucine--tRNA ligase (838 aa).

Positions 36-46 match the 'HIGH' region motif; sequence PYPSGKIHMGH. Positions 611–615 match the 'KMSKS' region motif; the sequence is KMSKS. Lys614 contributes to the ATP binding site.

It belongs to the class-I aminoacyl-tRNA synthetase family.

It is found in the cytoplasm. The enzyme catalyses tRNA(Leu) + L-leucine + ATP = L-leucyl-tRNA(Leu) + AMP + diphosphate. The sequence is that of Leucine--tRNA ligase from Wolbachia pipientis wMel.